A 548-amino-acid chain; its full sequence is Ankyrin repeat domain-containing protein SOWAHA (548 aa).

Positions 1-19 (MALAAAAAAAAAAAGVSQA) are cleaved as a signal peptide. A disordered region spans residues 114–212 (EDNCAPGAPH…PPTAQVPPQK (99 aa)). Over residues 136 to 153 (SAPSELQHTPETLPSEVT) the composition is skewed to polar residues. A compositionally biased stretch (pro residues) spans 198–212 (GPEPAPPTAQVPPQK). At S258 the chain carries Phosphoserine. 2 ANK repeats span residues 344-373 (SGFTALHWAAKNGDREMALQLVEVARRGGA) and 383-413 (GGYTPLHLAALHGHEDAAVLLVVRLGAQVHV). The disordered stretch occupies residues 512–548 (PRKKTKIRGGLPSFTEISHRSTPGPLAGLVPSLPPPT).

This sequence belongs to the SOWAH family.

The protein is Ankyrin repeat domain-containing protein SOWAHA (Sowaha) of Mus musculus (Mouse).